We begin with the raw amino-acid sequence, 736 residues long: Copper-exporting P-type ATPase (736 aa).

Positions 1-17 (MKHDHHQGHTHSGKGHA) are enriched in basic residues. The interval 1 to 32 (MKHDHHQGHTHSGKGHACHHEHNSPKTQQASS) is disordered. The next 6 membrane-spanning stretches (helical) occupy residues 85–105 (FWIALMLTIPVVILEMGGHGL), 114–134 (SSWIQLLLATPVVLWGGWPFF), 149–169 (FTLIAMGIGVAWIYSMVAVLW), 183–203 (VVAVYFEAAAVITTLVLLGQV), 341–361 (GWFVPAVILVAVLSFIVWALL), and 369–389 (YGLIAAVSVLIIACPCALGLA). Asp426 (4-aspartylphosphate intermediate) is an active-site residue. Asp426, Thr428, and Asp624 together coordinate Mg(2+). A run of 2 helical transmembrane segments spans residues 682 to 702 (LFFAFIYNVLGVPLAAGVLYP) and 706 to 726 (LLLSPMIAAAAMALSSVSVII).

The protein belongs to the cation transport ATPase (P-type) (TC 3.A.3) family. Type IB subfamily. Requires Mg(2+) as cofactor.

It is found in the cell inner membrane. It catalyses the reaction Cu(+)(in) + ATP + H2O = Cu(+)(out) + ADP + phosphate + H(+). With respect to regulation, activated by phospholipids, Mg(2+) and Cu(+). Functionally, couples the hydrolysis of ATP with the export of copper. This is Copper-exporting P-type ATPase from Legionella pneumophila subsp. pneumophila (strain Philadelphia 1 / ATCC 33152 / DSM 7513).